Here is a 251-residue protein sequence, read N- to C-terminus: Coproheme decarboxylase (251 aa).

Fe-coproporphyrin III is bound by residues Arg-133, 147–151 (YPMSK), His-174, Gln-187, and Ser-225. The active site involves Tyr-147.

This sequence belongs to the ChdC family. Type 1 subfamily. Requires Fe-coproporphyrin III as cofactor.

The catalysed reaction is Fe-coproporphyrin III + 2 H2O2 + 2 H(+) = heme b + 2 CO2 + 4 H2O. It carries out the reaction Fe-coproporphyrin III + H2O2 + H(+) = harderoheme III + CO2 + 2 H2O. The enzyme catalyses harderoheme III + H2O2 + H(+) = heme b + CO2 + 2 H2O. It functions in the pathway porphyrin-containing compound metabolism; protoheme biosynthesis. Its function is as follows. Involved in coproporphyrin-dependent heme b biosynthesis. Catalyzes the decarboxylation of Fe-coproporphyrin III (coproheme) to heme b (protoheme IX), the last step of the pathway. The reaction occurs in a stepwise manner with a three-propionate intermediate. This Listeria monocytogenes serotype 4b (strain CLIP80459) protein is Coproheme decarboxylase.